A 533-amino-acid polypeptide reads, in one-letter code: Hydroxylamine reductase (533 aa).

4 residues coordinate [4Fe-4S] cluster: cysteine 3, cysteine 6, cysteine 15, and cysteine 21. Histidine 234, glutamate 258, cysteine 302, cysteine 389, cysteine 417, cysteine 442, glutamate 476, and lysine 478 together coordinate hybrid [4Fe-2O-2S] cluster. Position 389 is a cysteine persulfide (cysteine 389).

It belongs to the HCP family. Requires [4Fe-4S] cluster as cofactor. It depends on hybrid [4Fe-2O-2S] cluster as a cofactor.

It is found in the cytoplasm. The catalysed reaction is A + NH4(+) + H2O = hydroxylamine + AH2 + H(+). Functionally, catalyzes the reduction of hydroxylamine to form NH(3) and H(2)O. In Maridesulfovibrio salexigens (strain ATCC 14822 / DSM 2638 / NCIMB 8403 / VKM B-1763) (Desulfovibrio salexigens), this protein is Hydroxylamine reductase.